Consider the following 127-residue polypeptide: MDAVAVYHGKISRETGEKLLLATGLDGSYLLRDSESVPGVYCLCVLYHGYIYTYRVSQTETGSWSAETAPGVHKRYFRKIKNLISAFQKPDQGIVIPLQYPVEKSSPRSTQGTTGIREDPDVCLKAP.

An SH2 domain is found at 6–102 (VYHGKISRET…GIVIPLQYPV (97 aa)). An interaction with FYN SH3 domain region spans residues 67 to 92 (ETAPGVHKRYFRKIKNLISAFQKPDQ). The residue at position 89 (Lys-89) is an N6-acetyllysine. Positions 104–127 (KSSPRSTQGTTGIREDPDVCLKAP) are disordered. Residues 116-127 (IREDPDVCLKAP) show a composition bias toward basic and acidic residues.

As to quaternary structure, interacts with CD84, CD244, LY9, SLAMF1 and FYN. Interacts with NTRK1, NTRK2 and NTRK3.

Its subcellular location is the cytoplasm. In terms of biological role, cytoplasmic adapter regulating receptors of the signaling lymphocytic activation molecule (SLAM) family such as SLAMF1, CD244, LY9, CD84, SLAMF6 and SLAMF7. In SLAM signaling seems to cooperate with SH2D1B/EAT-2. Initially it has been proposed that association with SLAMF1 prevents SLAMF1 binding to inhibitory effectors including INPP5D/SHIP1 and PTPN11/SHP-2. However, by simultaneous interactions, recruits FYN which subsequently phosphorylates and activates SLAMF1. Positively regulates CD244/2B4- and CD84-mediated natural killer (NK) cell functions. Can also promote CD48-, SLAMF6 -, LY9-, and SLAMF7-mediated NK cell activation. In the context of NK cell-mediated cytotoxicity enhances conjugate formation with target cells. May also regulate the activity of the neurotrophin receptors NTRK1, NTRK2 and NTRK3. This is SH2 domain-containing protein 1A (SH2D1A) from Saguinus oedipus (Cotton-top tamarin).